The sequence spans 343 residues: Phenylalanine--tRNA ligase alpha subunit (343 aa).

Mg(2+) is bound at residue E268.

Belongs to the class-II aminoacyl-tRNA synthetase family. Phe-tRNA synthetase alpha subunit type 1 subfamily. In terms of assembly, tetramer of two alpha and two beta subunits. The cofactor is Mg(2+).

The protein localises to the cytoplasm. It catalyses the reaction tRNA(Phe) + L-phenylalanine + ATP = L-phenylalanyl-tRNA(Phe) + AMP + diphosphate + H(+). The sequence is that of Phenylalanine--tRNA ligase alpha subunit from Cupriavidus necator (strain ATCC 17699 / DSM 428 / KCTC 22496 / NCIMB 10442 / H16 / Stanier 337) (Ralstonia eutropha).